The sequence spans 857 residues: Bifunctional levopimaradiene synthase, chloroplastic (857 aa).

The N-terminal 33 residues, 1-33, are a transit peptide targeting the chloroplast; sequence MALPSSSLSSQIHTGATTQCIPHFHGSLNAGTS. K257 is a binding site for substrate. Mg(2+) contacts are provided by D390 and D392. Residues 390–393 carry the DXDD motif motif; that stretch reads DIDD. K477 is a substrate binding site. Positions 609, 613, 753, 757, and 761 each coordinate Mg(2+). Residues 609–613 carry the DDXXD motif motif; that stretch reads DDLYD.

Belongs to the terpene synthase family. Tpsd subfamily. It depends on Mg(2+) as a cofactor.

The protein resides in the plastid. Its subcellular location is the chloroplast. The catalysed reaction is (2E,6E,10E)-geranylgeranyl diphosphate = (+)-copalyl diphosphate. It catalyses the reaction (+)-copalyl diphosphate = abieta-7,13-diene + diphosphate. The enzyme catalyses (+)-copalyl diphosphate = abieta-8(14),12-diene + diphosphate. It carries out the reaction (+)-copalyl diphosphate = neoabietadiene + diphosphate. Its pathway is terpene metabolism; oleoresin biosynthesis. Involved in defensive oleoresin formation in conifers in response to insect attack or other injury. Involved in diterpene (C20) olefins biosynthesis. Bifunctional enzyme that catalyzes two sequential cyclizations of geranylgeranyl diphosphate (GGPP) to levopimaradiene. Levopimaradiene is the major products of the enzyme with abietadiene and neoabietadiene. No activity with farnesyl diphosphate (FPP) as substrate. In Pinus banksiana (Jack pine), this protein is Bifunctional levopimaradiene synthase, chloroplastic.